The primary structure comprises 1072 residues: DNA-directed RNA polymerase subunit beta (1072 aa).

It belongs to the RNA polymerase beta chain family. As to quaternary structure, in plastids the minimal PEP RNA polymerase catalytic core is composed of four subunits: alpha, beta, beta', and beta''. When a (nuclear-encoded) sigma factor is associated with the core the holoenzyme is formed, which can initiate transcription.

Its subcellular location is the plastid. It localises to the chloroplast. It carries out the reaction RNA(n) + a ribonucleoside 5'-triphosphate = RNA(n+1) + diphosphate. Its function is as follows. DNA-dependent RNA polymerase catalyzes the transcription of DNA into RNA using the four ribonucleoside triphosphates as substrates. The protein is DNA-directed RNA polymerase subunit beta of Crucihimalaya wallichii (Rock-cress).